Reading from the N-terminus, the 153-residue chain is Transcriptional repressor NrdR (153 aa).

A zinc finger spans residues 3-34 (CPFCGYEDSKVVDTRPTNEGKTIKRRRECLKC). The ATP-cone domain occupies 49 to 139 (ILVIKKDNRR…VYRQFKDINT (91 aa)).

Belongs to the NrdR family. Zn(2+) serves as cofactor.

Its function is as follows. Negatively regulates transcription of bacterial ribonucleotide reductase nrd genes and operons by binding to NrdR-boxes. In Caldicellulosiruptor bescii (strain ATCC BAA-1888 / DSM 6725 / KCTC 15123 / Z-1320) (Anaerocellum thermophilum), this protein is Transcriptional repressor NrdR.